The chain runs to 458 residues: Phosphoglucosamine mutase (458 aa).

The Phosphoserine intermediate role is filled by Ser106. The Mg(2+) site is built by Ser106, Asp247, Asp249, and Asp251. Residue Ser106 is modified to Phosphoserine.

This sequence belongs to the phosphohexose mutase family. Mg(2+) serves as cofactor. Post-translationally, activated by phosphorylation.

The enzyme catalyses alpha-D-glucosamine 1-phosphate = D-glucosamine 6-phosphate. In terms of biological role, catalyzes the conversion of glucosamine-6-phosphate to glucosamine-1-phosphate. This chain is Phosphoglucosamine mutase, found in Chlamydia trachomatis serovar D (strain ATCC VR-885 / DSM 19411 / UW-3/Cx).